A 204-amino-acid chain; its full sequence is Ribosome maturation factor RimP (204 aa).

The segment at 176–204 (GNFDESQFDEIEESEGEEADEAEQPPTKH) is disordered. The span at 181–198 (SQFDEIEESEGEEADEAE) shows a compositional bias: acidic residues.

It belongs to the RimP family.

Its subcellular location is the cytoplasm. Required for maturation of 30S ribosomal subunits. The sequence is that of Ribosome maturation factor RimP from Cereibacter sphaeroides (strain KD131 / KCTC 12085) (Rhodobacter sphaeroides).